Reading from the N-terminus, the 510-residue chain is Bifunctional purine biosynthesis protein PurH (510 aa).

The 142-residue stretch at 1-142 (MRALLSVSDK…KNYKDVMVLC (142 aa)) folds into the MGS-like domain.

The protein belongs to the PurH family.

The enzyme catalyses (6R)-10-formyltetrahydrofolate + 5-amino-1-(5-phospho-beta-D-ribosyl)imidazole-4-carboxamide = 5-formamido-1-(5-phospho-D-ribosyl)imidazole-4-carboxamide + (6S)-5,6,7,8-tetrahydrofolate. The catalysed reaction is IMP + H2O = 5-formamido-1-(5-phospho-D-ribosyl)imidazole-4-carboxamide. It participates in purine metabolism; IMP biosynthesis via de novo pathway; 5-formamido-1-(5-phospho-D-ribosyl)imidazole-4-carboxamide from 5-amino-1-(5-phospho-D-ribosyl)imidazole-4-carboxamide (10-formyl THF route): step 1/1. The protein operates within purine metabolism; IMP biosynthesis via de novo pathway; IMP from 5-formamido-1-(5-phospho-D-ribosyl)imidazole-4-carboxamide: step 1/1. The chain is Bifunctional purine biosynthesis protein PurH from Campylobacter jejuni subsp. doylei (strain ATCC BAA-1458 / RM4099 / 269.97).